The following is a 238-amino-acid chain: ATP-dependent Clp protease ATP-binding subunit CLPT1, chloroplastic (238 aa).

The N-terminal 64 residues, 1 to 64, are a transit peptide targeting the chloroplast; it reads MASYTVSFIP…VPKLRCLTSA (64 aa). Positions 83–228 constitute a Clp R domain; it reads IPKWSARAIK…KEVEKSMNED (146 aa). Repeat regions lie at residues 86-151 and 163-228; these read WSAR…LGKS and LTEP…MNED.

The protein belongs to the ClpA/ClpB family. As to quaternary structure, monomer and homodimer. Binds to the CLP3-6 ring (P-ring). The dimers monomerize before association to the P-ring. Component of the chloroplastic Clp protease core complex which consist of at least 16 proteins: CLPP4 (3 copies), CLPP5 (3 copies), CLPR4 (2 copies), ClpP1 (1 copy), CLPP6 (1 copy), CLPR2 (1 copy), CLPT1 (1 copy), CLPT2 (1 copy) and 3 copies of CLPP3 and/or CLPR1 and/or CLPR3. Interacts with CLPC2 and CLPD. Interacts with CPN21. No interactions with CLPS1.

It is found in the plastid. It localises to the chloroplast. In terms of biological role, accessory protein regulating the assembly of the plastidial Clp protease system. CLPT1 first binds to the heptameric P-ring containing the CLP3-6 subunits followed by CLPT2, and only then does the P-ring combine with the R-ring composed of the clpP1 and CLPR1-4 subunits. Once the core complex is fully assembled, it then associates to the CLPC chaperone partner to form the functional protease. CLPT1 and CLPT2 are partially redundant. This is ATP-dependent Clp protease ATP-binding subunit CLPT1, chloroplastic from Arabidopsis thaliana (Mouse-ear cress).